A 739-amino-acid polypeptide reads, in one-letter code: MDEADARAEFEALQTKIEKADHDYHQKDAPTLSDADYDRLKRRYLALADAFPILAKDGTRVASVGAPAASGFGKVTHAQRMMSLGNAFEDQDVEDFAVGLRRYLGLSSEAPLAFTAEPKIDGLSLSLRYEAGKLVQAATRGDGAVGENVTENARTISDIPQEISGAPEVLEVRGEVYMSHADFEALNARHAETGGKIFANPRNAAAGSLRQLDAEITRARPLRFFAYSWGELSEPLAETQIDAIERLASLGFQTNPLTRCCEQISELLAHYHAIEEQRADLGYDIDGVVYKVNDLSLQERLGFRSTTPRWAIAHKFPAELAWTHLEGIDIQVGRTGALSPVARLHPVTVGGVVVSNATLHNEDYIAGLDSKGAPIRGGKDIRVGDWVQIYRAGDVIPKVADVDLSRRPEGTERYAFPTRCPRCDSPAVREEGDAVRRCSGGLICPAQAVEKLKHFVSRAAFDIEGLGAKQVEQFHSDGWVKEPADIFELQQRYGSGLQQLKNREGWGEKSASALFAAIEDKRRIEFARLIFGLGIRHVGEVAAKDLALHFRTWSALAEAADLARAAALAHRAADEAEIVERQEAQASARRAKISEARNAAVATCAVAPDSQAAWDDLISVDGLGPTVALSLSDAFANPEERAAFDRLIAHLEIIEPDAPADDSPVAGKTVVFTGTLEKMTRAEAKARAEALGAKVSGSVSKKTDILVAGPGAGSKAAKAAELGIQTLDEDGWLDLIGQA.

NAD(+)-binding positions include 34-38, 83-84, and Glu117; these read DADYD and SL. Catalysis depends on Lys119, which acts as the N6-AMP-lysine intermediate. Positions 140, 175, 291, and 315 each coordinate NAD(+). Zn(2+)-binding residues include Cys420, Cys423, Cys438, and Cys444. One can recognise a BRCT domain in the interval 660–739; that stretch reads ADDSPVAGKT…DGWLDLIGQA (80 aa).

It belongs to the NAD-dependent DNA ligase family. LigA subfamily. The cofactor is Mg(2+). Requires Mn(2+) as cofactor.

The enzyme catalyses NAD(+) + (deoxyribonucleotide)n-3'-hydroxyl + 5'-phospho-(deoxyribonucleotide)m = (deoxyribonucleotide)n+m + AMP + beta-nicotinamide D-nucleotide.. Its function is as follows. DNA ligase that catalyzes the formation of phosphodiester linkages between 5'-phosphoryl and 3'-hydroxyl groups in double-stranded DNA using NAD as a coenzyme and as the energy source for the reaction. It is essential for DNA replication and repair of damaged DNA. The protein is DNA ligase of Ruegeria sp. (strain TM1040) (Silicibacter sp.).